The sequence spans 522 residues: MIRLHRPQRPPLRAPLRATPSLSLRWRVMLLAMSMVAMVVVLMAFAVYAVISAALYSDIDNQLQSRAQLLIASGSLAADPGKAIEGTAYSDVNAMLVNPGHAIYTAQQPGQTLPVGSPEKAVIHGELFMSRRTAGDQRILAVHLQNGTSLLISKSLKPTEAVMNKLRWVLLIVGGVGVAVAAVAGGMVTRAGLRPVARLTEAAERVARTDDLRPIPVFGSDELARLTESFNLMLRALAESRERQARLVTDAGHELRTPLTSLRTNVELLMASMEPGAPRLPEQEMVELRADVLAQIEELSTLVGDLVDLTRDDAGQVVHEPVDMSDVIDRSLERVRRRRNDIHFDVDVTPWQMYGDAAGLSRAVLNLLDNAAKWSPPGGHVGVTMRQLDPSHAELVVSDHGPGIPPQERRLVFERFYRSTSARAMPGSGLGLAIVKKVVLNHGGMLRVEDTVPGGQPPGTSFYVLLPGRPLPPAGHSTPAGESETDKAEAATDPAVPVAGDTANSRESANVISVDSQSARAR.

At 1–30 the chain is on the cytoplasmic side; sequence MIRLHRPQRPPLRAPLRATPSLSLRWRVML. The chain crosses the membrane as a helical span at residues 31–51; that stretch reads LAMSMVAMVVVLMAFAVYAVI. Over 52-167 the chain is Extracellular; sequence SAALYSDIDN…PTEAVMNKLR (116 aa). The helical transmembrane segment at 168-188 threads the bilayer; sequence WVLLIVGGVGVAVAAVAGGMV. The Cytoplasmic segment spans residues 189–522; that stretch reads TRAGLRPVAR…SVDSQSARAR (334 aa). An HAMP domain is found at 190–242; that stretch reads RAGLRPVARLTEAAERVARTDDLRPIPVFGSDELARLTESFNLMLRALAESRE. Positions 250–470 constitute a Histidine kinase domain; the sequence is DAGHELRTPL…SFYVLLPGRP (221 aa). H253 is modified (phosphohistidine; by autocatalysis). The interval 468–522 is disordered; the sequence is GRPLPPAGHSTPAGESETDKAEAATDPAVPVAGDTANSRESANVISVDSQSARAR. Residues 502–522 are compositionally biased toward polar residues; it reads TANSRESANVISVDSQSARAR.

Mg(2+) serves as cofactor. Mn(2+) is required as a cofactor. In terms of processing, autophosphorylated.

It is found in the cell membrane. It catalyses the reaction ATP + protein L-histidine = ADP + protein N-phospho-L-histidine.. Its function is as follows. Member of the two-component regulatory system MprB/MprA which contributes to maintaining a balance among several systems involved in stress resistance and is required for establishment and maintenance of persistent infection in the host. In response to environmental signals MprB acts both as a membrane-associated protein kinase that undergoes autophosphorylation and subsequently transfers the phosphate to MprA, and a protein phosphatase that dephosphorylates phospho-MprA. This chain is Signal transduction histidine-protein kinase/phosphatase MprB (mprB), found in Mycobacterium avium (strain 104).